The chain runs to 241 residues: MKNNKIYINKKILLKLSGECLKKGKKNLVDFDILNKITNEIKNLFNLGIQIGIVIGGGNLFRGSQLKIHGIKRNIGDHIGMMSTLINGLFIYNHFERLNIKSQLISPFPFNINGICESYNIFRINKILKKKIVIFCFGIGHTLFTTDSAACLKAIEIDANLLLKITNVDGVFSEDPAKNPNATLYKKISYDYALKKNLKIMDFTAFAIAKEHKLPIRIFNIKEPNSLYKAIIGKDIGTLIN.

15-18 (KLSG) is a binding site for ATP. Glycine 57 serves as a coordination point for UMP. Glycine 58 and arginine 62 together coordinate ATP. UMP is bound by residues aspartate 77 and 139 to 146 (IGHTLFTT). Residues threonine 166, asparagine 167, phenylalanine 172, and aspartate 175 each coordinate ATP.

It belongs to the UMP kinase family. In terms of assembly, homohexamer.

The protein localises to the cytoplasm. The catalysed reaction is UMP + ATP = UDP + ADP. It participates in pyrimidine metabolism; CTP biosynthesis via de novo pathway; UDP from UMP (UMPK route): step 1/1. With respect to regulation, inhibited by UTP. Catalyzes the reversible phosphorylation of UMP to UDP. The sequence is that of Uridylate kinase from Wigglesworthia glossinidia brevipalpis.